The following is a 409-amino-acid chain: L-cysteine:1D-myo-inositol 2-amino-2-deoxy-alpha-D-glucopyranoside ligase (409 aa).

Residue Cys-43 participates in Zn(2+) binding. Residues 43 to 46 (CGIT), Thr-58, and 81 to 83 (NVT) each bind L-cysteinyl-5'-AMP. The 'HIGH' region motif lies at 45 to 55 (ITPYDATHMGH). The short motif at 183-188 (ERGGDP) is the 'ERGGDP' region element. Residue Trp-224 coordinates L-cysteinyl-5'-AMP. Residue Cys-228 coordinates Zn(2+). 246-248 (GSD) serves as a coordination point for L-cysteinyl-5'-AMP. Zn(2+) is bound at residue His-253. Val-280 contacts L-cysteinyl-5'-AMP. Residues 286 to 290 (KMSKS) carry the 'KMSKS' region motif.

It belongs to the class-I aminoacyl-tRNA synthetase family. MshC subfamily. In terms of assembly, monomer. Zn(2+) is required as a cofactor.

The enzyme catalyses 1D-myo-inositol 2-amino-2-deoxy-alpha-D-glucopyranoside + L-cysteine + ATP = 1D-myo-inositol 2-(L-cysteinylamino)-2-deoxy-alpha-D-glucopyranoside + AMP + diphosphate + H(+). Functionally, catalyzes the ATP-dependent condensation of GlcN-Ins and L-cysteine to form L-Cys-GlcN-Ins. This is L-cysteine:1D-myo-inositol 2-amino-2-deoxy-alpha-D-glucopyranoside ligase from Streptomyces griseus subsp. griseus (strain JCM 4626 / CBS 651.72 / NBRC 13350 / KCC S-0626 / ISP 5235).